A 649-amino-acid polypeptide reads, in one-letter code: MESCNVELIFDHIGHFGRFQIVLYLICAYQSLSCGIHYLSSVFLSIIPEHACKPPGMVRKAVFHNVSAWRLEDILALRSPEHKDHIMVELQDGEIWELTRCSRTWRENTSHLGYEYSGYKHDSPCFDGYVYDQSKWRNSAVRNFNLVCDQKWYARMIQPLIIFGVMLGSITFSYLSDRFGRRMALWCTSIGVFFFGIASLFIFDYLSFMITRFFLVMASSGYFVVVFVYVMEIIGKKARTWASIHLNTFFAIGAMLVALASYLLKTWWLYQIILCIVTTPFILCCWMLPETPFWLLSEGRYKEAQGTVDTMAVWNKSSSCDLVELLSLDVTRSHNKSPHSIRKHRLADLFHNLDVAKMTLIVWLDWFTANLGYYMFGKEVIRRKENEPLYLLLVGAMEIPAYICLCIWLKRVGRRKTMLLFLLVSSLTCMLHVVMPSDYKTAKRMVALLVKSVISSVFAFIYLYTAELYPTTVRCLAVGSSNMVSHVSSIFIPFTSHFSKVWIFLPQILFGILAILSGLLSLKLPETQDTPMKSTWETTEQQVPENKDSLGEGPPDSFERWDSSRALSFAERWGLSRASPDAEKWGSGRVPPDAGKWGAGIAPPVTERGASGRASLEDESGGSGRAPPEKNTEMENEIENMKVSNLGGF.

The chain crosses the membrane as a helical span at residues 19-39 (FQIVLYLICAYQSLSCGIHYL). Residues asparagine 65 and asparagine 108 are each glycosylated (N-linked (GlcNAc...) asparagine). 5 helical membrane passes run 156–176 (MIQPLIIFGVMLGSITFSYLS), 190–210 (IGVFFFGIASLFIFDYLSFMI), 214–234 (FLVMASSGYFVVVFVYVMEII), 244–264 (IHLNTFFAIGAMLVALASYLL), and 268–288 (WLYQIILCIVTTPFILCCWML). Asparagine 315 carries an N-linked (GlcNAc...) asparagine glycan. A run of 6 helical transmembrane segments spans residues 356–376 (AKMTLIVWLDWFTANLGYYMF), 389–409 (LYLLLVGAMEIPAYICLCIWL), 417–437 (TMLLFLLVSSLTCMLHVVMPS), 445–465 (MVALLVKSVISSVFAFIYLYT), 475–495 (CLAVGSSNMVSHVSSIFIPFT), and 501–521 (VWIFLPQILFGILAILSGLLS). Positions 530–544 (TPMKSTWETTEQQVP) are enriched in polar residues. Disordered regions lie at residues 530–560 (TPMKSTWETTEQQVPENKDSLGEGPPDSFER) and 579–649 (SPDA…LGGF).

The protein belongs to the major facilitator (TC 2.A.1) superfamily. Organic cation transporter (TC 2.A.1.19) family.

The protein localises to the cell membrane. It catalyses the reaction (R)-carnitine(in) = (R)-carnitine(out). The catalysed reaction is spermidine(in) = spermidine(out). Its function is as follows. Facilitative organic cation transporter that mediates the transport of carnitine as well as the polyamine spermidine. Mediates the partially Na(+)-dependent bidirectional transport of carnitine. May mediate L-carnitine secretion from testis epididymal epithelium into the lumen which is involved in the maturation of spermatozoa. This is Solute carrier family 22 member 16 from Mus musculus (Mouse).